A 202-amino-acid chain; its full sequence is Protein Nef (202 aa).

Gly-2 carries the N-myristoyl glycine; by host lipid modification. Phosphoserine; by host is present on Ser-6. The interval 62–65 (EEEE) is acidic; interacts with host PACS1 and PACS2; stabilizes the interaction of NEF/MHC-I with host AP1M1; necessary for MHC-I internalization. Residues 69 to 78 (PVTPQVPLRP) are SH3-binding; interaction with Src family tyrosine kinases. Positions 72 to 75 (PQVP) match the PxxP; stabilizes the interaction of NEF/MHC-I with host AP1M1; necessary for MHC-I internalization motif. The tract at residues 108 to 124 (DILDLWIYHTQGYFPDW) is mediates dimerization, Nef-PTE1 interaction. The tract at residues 148-180 (VEPDKVEEANKGENTRLLHPVSLHGMDDPEREV) is binding to ATP6V1H. The Dileucine internalization motif; necessary for CD4 internalization motif lies at 164 to 165 (LL). A Diacidic; necessary for CD4 internalization motif is present at residues 174-175 (DD).

It belongs to the lentivirus primate group Nef protein family. In terms of assembly, monomer; cytosolic form. Homodimer; membrane bound form. Interacts with Nef associated p21-activated kinase (PAK2); this interaction activates PAK2. Associates with the Nef-MHC-I-AP1 complex; this complex is required for MHC-I internalization. Interacts (via C-terminus) with host PI3-kinase. Interacts with host PACS1; this interaction seems to be weak. Interacts with host PACS2. Interacts with host LCK and MAPK3; these interactions inhibit the kinase activity of the latter. Interacts with host ATP6V1H; this interaction may play a role in CD4 endocytosis. Associates with the CD4-Nef-AP2 complex; this complex is required for CD4 internalization. Interacts with host AP2 subunit alpha and AP2 subunit sigma2. Interacts with TCR-zeta chain; this interaction up-regulates the Fas ligand (FasL) surface expression. Interacts with host HCK, LYN, and SRC; these interactions activate the Src family kinases. Interacts with MAP3K5; this interaction inhibits the Fas and TNFR-mediated death signals. Interacts with beta-COP and PTE1. Interacts with human RACK1; this increases Nef phosphorylation by PKC. Interacts with TP53; this interaction decreases the half-life of TP53, protecting the infected cell against p53-mediated apoptosis. In terms of processing, the virion-associated Nef proteins are cleaved by the viral protease to release the soluble C-terminal core protein. Nef is probably cleaved concomitantly with viral structural proteins on maturation of virus particles. Myristoylated. Post-translationally, phosphorylated on serine residues, probably by host PKCdelta and theta.

Its subcellular location is the host cell membrane. It is found in the virion. It localises to the secreted. The protein resides in the host Golgi apparatus membrane. Its function is as follows. Factor of infectivity and pathogenicity, required for optimal virus replication. Alters numerous pathways of T-lymphocyte function and down-regulates immunity surface molecules in order to evade host defense and increase viral infectivity. Alters the functionality of other immunity cells, like dendritic cells, monocytes/macrophages and NK cells. Functionally, in infected CD4(+) T-lymphocytes, down-regulates the surface MHC-I, mature MHC-II, CD4, CD28, CCR5 and CXCR4 molecules. Mediates internalization and degradation of host CD4 through the interaction of with the cytoplasmic tail of CD4, the recruitment of AP-2 (clathrin adapter protein complex 2), internalization through clathrin coated pits, and subsequent transport to endosomes and lysosomes for degradation. Diverts host MHC-I molecules to the trans-Golgi network-associated endosomal compartments by an endocytic pathway to finally target them for degradation. MHC-I down-regulation may involve AP-1 (clathrin adapter protein complex 1) or possibly Src family kinase-ZAP70/Syk-PI3K cascade recruited by PACS2. In consequence infected cells are masked for immune recognition by cytotoxic T-lymphocytes. Decreasing the number of immune receptors also prevents reinfection by more HIV particles (superinfection). Down-regulates host SERINC3 and SERINC5 thereby excluding these proteins from the viral particles. Virion infectivity is drastically higher when SERINC3 or SERINC5 are excluded from the viral envelope, because these host antiviral proteins impair the membrane fusion event necessary for subsequent virion penetration. In terms of biological role, bypasses host T-cell signaling by inducing a transcriptional program nearly identical to that of anti-CD3 cell activation. Interaction with TCR-zeta chain up-regulates the Fas ligand (FasL). Increasing surface FasL molecules and decreasing surface MHC-I molecules on infected CD4(+) cells send attacking cytotoxic CD8+ T-lymphocytes into apoptosis. Plays a role in optimizing the host cell environment for viral replication without causing cell death by apoptosis. Protects the infected cells from apoptosis in order to keep them alive until the next virus generation is ready to strike. Inhibits the Fas and TNFR-mediated death signals by blocking MAP3K5/ASK1. Decreases the half-life of TP53, protecting the infected cell against p53-mediated apoptosis. Inhibits the apoptotic signals regulated by the Bcl-2 family proteins through the formation of a Nef/PI3-kinase/PAK2 complex that leads to activation of PAK2 and induces phosphorylation of host BAD. Its function is as follows. Extracellular Nef protein targets CD4(+) T-lymphocytes for apoptosis by interacting with CXCR4 surface receptors. This chain is Protein Nef, found in Human immunodeficiency virus type 1 group M subtype B (isolate Lai) (HIV-1).